The primary structure comprises 463 residues: Retinoic acid receptor RXR-gamma (463 aa).

Residues 1–138 (MYGNYSHFMK…TSPGSLVKHI (138 aa)) are modulating. A disordered region spans residues 17 to 53 (GSPGHSGSTSMSPSAALSTGKPMDSHPSYTDTPVSAP). Polar residues predominate over residues 21 to 33 (HSGSTSMSPSAAL). 2 consecutive NR C4-type zinc fingers follow at residues 139–159 (CAIC…CEGC) and 175–199 (CRDN…YQKC). Residues 139-204 (CAICGDRSSG…RYQKCLVMGM (66 aa)) constitute a DNA-binding region (nuclear receptor). Positions 205 to 230 (KREAVQEERQRSRERAESEAECASSG) are hinge. Residues 211 to 222 (EERQRSRERAES) show a composition bias toward basic and acidic residues. Positions 211–232 (EERQRSRERAESEAECASSGHE) are disordered. The 229-residue stretch at 231-459 (HEDMPVERIL…TFLMEMLETP (229 aa)) folds into the NR LBD domain.

The protein belongs to the nuclear hormone receptor family. NR2 subfamily. In terms of assembly, homodimer. Heterodimer with a RAR molecule. Binds DNA preferentially as a RAR/RXR heterodimer. Interacts with RARA. Post-translationally, acetylated by EP300.

The protein resides in the nucleus. It localises to the cytoplasm. In terms of biological role, receptor for retinoic acid. Retinoic acid receptors bind as heterodimers to their target response elements in response to their ligands, all-trans or 9-cis retinoic acid, and regulate gene expression in various biological processes. The RAR/RXR heterodimers bind to the retinoic acid response elements (RARE) composed of tandem 5'-AGGTCA-3' sites known as DR1-DR5. The high affinity ligand for RXRs is 9-cis retinoic acid. The chain is Retinoic acid receptor RXR-gamma (RXRG) from Sus scrofa (Pig).